The sequence spans 160 residues: Protein cornichon homolog 2 (160 aa).

The Cytoplasmic segment spans residues 1 to 10 (MAFTFAAFCY). The helical transmembrane segment at 11 to 31 (MLTLVLCASLIFFVIWHIIAF) threads the bilayer. The Lumenal portion of the chain corresponds to 32–72 (DELRTDFKNPIDQGNPARARERLKNIERICCLLRKLVVPEY). The helical transmembrane segment at 73–93 (SIHGLFCLMFLCAAEWVTLGL) threads the bilayer. At 94–138 (NIPLLFYHLWRYFHRPADGSEVMYDAVSIMNADILNYCQKESWCK) the chain is on the cytoplasmic side. Residues 139-159 (LAFYLLSFFYYLYSMVYTLVS) form a helical membrane-spanning segment. Position 160 (Phe-160) is a topological domain, lumenal.

The protein belongs to the cornichon family. Acts as an auxiliary subunit for AMPA-selective glutamate receptors (AMPARs). Found in a complex with GRIA1, GRIA2, GRIA3, GRIA4, CNIH3, CACNG2, CACNG3, CACNG4, CACNG5, CACNG7 and CACNG8. Interacts with CACGN8. Interacts with GRIA1. Found in a complex with GRIA1, GRIA2, GRIA3, GRIA4, DLG4 and CACNG8. As to expression, expression is up-regulated in dorsolateral prefrontal cortex of patients with schizophrenia (postmortem brain study).

The protein localises to the endoplasmic reticulum membrane. It localises to the postsynaptic cell membrane. It is found in the cell projection. The protein resides in the dendrite. Its subcellular location is the dendritic spine. The protein localises to the postsynaptic density. Regulates the trafficking and gating properties of AMPA-selective glutamate receptors (AMPARs). Promotes their targeting to the cell membrane and synapses and modulates their gating properties by regulating their rates of activation, deactivation and desensitization. Blocks CACNG8-mediated resensitization of AMPA receptors. The polypeptide is Protein cornichon homolog 2 (Homo sapiens (Human)).